Reading from the N-terminus, the 296-residue chain is Uricase (296 aa).

Residues Lys14 and Thr61 each act as charge relay system in the active site. Residues Thr61, Asp62, Phe163, Arg180, Val229, Gln230, and Asn256 each contribute to the urate site. His258 acts as the Charge relay system in catalysis.

It belongs to the uricase family.

The protein resides in the peroxisome. The protein localises to the cytoplasm. Its subcellular location is the nucleus. It catalyses the reaction urate + O2 + H2O = 5-hydroxyisourate + H2O2. It participates in purine metabolism; urate degradation; (S)-allantoin from urate: step 1/3. Catalyzes the oxidation of uric acid to 5-hydroxyisourate, which is further processed to form (S)-allantoin. This Schizosaccharomyces pombe (strain 972 / ATCC 24843) (Fission yeast) protein is Uricase.